Here is a 263-residue protein sequence, read N- to C-terminus: Stress-response A/B barrel domain-containing protein UP3 (263 aa).

Stress-response A/B barrel domains are found at residues 49 to 142 and 158 to 252; these read IEHI…AVDW and VAKL…VVEF. The Peroxisomal targeting signal motif lies at 261 to 263; sequence SSL.

As to quaternary structure, homodimer.

It localises to the peroxisome. Functionally, involved in stress response. This Arabidopsis thaliana (Mouse-ear cress) protein is Stress-response A/B barrel domain-containing protein UP3.